A 640-amino-acid chain; its full sequence is 1-deoxy-D-xylulose-5-phosphate synthase (640 aa).

Residues H75 and 117 to 119 (GHA) contribute to the thiamine diphosphate site. D146 is a Mg(2+) binding site. Thiamine diphosphate is bound by residues 147 to 148 (AA), N175, and E370. Residue N175 participates in Mg(2+) binding.

Belongs to the transketolase family. DXPS subfamily. As to quaternary structure, homodimer. It depends on Mg(2+) as a cofactor. The cofactor is thiamine diphosphate.

The catalysed reaction is D-glyceraldehyde 3-phosphate + pyruvate + H(+) = 1-deoxy-D-xylulose 5-phosphate + CO2. It participates in metabolic intermediate biosynthesis; 1-deoxy-D-xylulose 5-phosphate biosynthesis; 1-deoxy-D-xylulose 5-phosphate from D-glyceraldehyde 3-phosphate and pyruvate: step 1/1. Catalyzes the acyloin condensation reaction between C atoms 2 and 3 of pyruvate and glyceraldehyde 3-phosphate to yield 1-deoxy-D-xylulose-5-phosphate (DXP). The polypeptide is 1-deoxy-D-xylulose-5-phosphate synthase (Chlamydia trachomatis serovar L2 (strain ATCC VR-902B / DSM 19102 / 434/Bu)).